Reading from the N-terminus, the 156-residue chain is Cyanate hydratase (156 aa).

Active-site residues include Arg96, Glu99, and Ser122.

This sequence belongs to the cyanase family.

The catalysed reaction is cyanate + hydrogencarbonate + 3 H(+) = NH4(+) + 2 CO2. In terms of biological role, catalyzes the reaction of cyanate with bicarbonate to produce ammonia and carbon dioxide. The polypeptide is Cyanate hydratase (Pseudomonas putida (strain W619)).